Consider the following 2893-residue polypeptide: Genome polyprotein (2893 aa).

A disordered region spans residues 206–226 (VQAKPEMDNPNPGPDGEGEVE). Positions 1446–1612 (SKLKTDLMEM…EEKKRGCKHC (167 aa)) constitute an SF3 helicase domain. 1472 to 1479 (GASGIGKS) contributes to the ATP binding site. The Peptidase C3 domain maps to 2119–2345 (GSTQQVDAAV…VAEPLVHEMF (227 aa)). Active-site for 3C-like protease activity residues include histidine 2170, asparagine 2227, and cysteine 2307. The region spanning 2633-2763 (THIVTGDYKN…NVSDNMIDKF (131 aa)) is the RdRp catalytic domain.

Specific enzymatic cleavages in vivo by the viral 3C-like protease yield three mature proteins. 3C-like protease is cleaved autocatalytically.

The protein resides in the virion. The enzyme catalyses RNA(n) + a ribonucleoside 5'-triphosphate = RNA(n+1) + diphosphate. The catalysed reaction is ATP + H2O = ADP + phosphate + H(+). Inhibited by Rupintrivir. Functionally, capsid protein that assembles with the capsid proteins VP1 and VP3 to form a pseudo-T3 icosahedral capsid of about 40 nm. Its function is as follows. Capsid protein that assembles with the capsid proteins VP1 and VP2 to form a pseudo T3 icosahedral capsid of about 40 nm. In terms of biological role, capsid protein that assembles with the capsid proteins VP2 and VP3 to form a pseudo T3 icosahedral capsid of about 40 nm. Displays RNA helix destabilizing and strand annealing acceleration activity. This activity is necessary at several points during genome replication, for example to separate duplexes that form after genome replication. Functionally, cysteine protease that generates mature viral proteins from the precursor polyprotein. Its function is as follows. Replicates genomic and antigenomic RNA. The polypeptide is Genome polyprotein (Deformed wing virus (DWV)).